A 330-amino-acid polypeptide reads, in one-letter code: Ferric enterobactin transport system permease protein FepG (330 aa).

Over 1–7 the chain is Periplasmic; the sequence is MIYVSRR. The helical transmembrane segment at 8-28 threads the bilayer; the sequence is LLITCLLLVSACVVAGIWGLR. The Cytoplasmic portion of the chain corresponds to 29–62; sequence SGAVTLETSQVFAALMGDAPRSMTMVVTEWRLPR. The helical transmembrane segment at 63-83 threads the bilayer; that stretch reads VLMALLIGAALGVSGAIFQSL. Residues 84–92 lie on the Periplasmic side of the membrane; the sequence is MRNPLGSPD. The helical transmembrane segment at 93–113 threads the bilayer; sequence VMGFNTGAWSGVLVAMVLFGQ. Topologically, residues 114 to 117 are cytoplasmic; the sequence is DLTA. Residues 118-138 form a helical membrane-spanning segment; the sequence is IALSAMVGGIVTSLLVWLLAW. Residues 139–146 are Periplasmic-facing; it reads RNGIDTFR. Residues 147–167 form a helical membrane-spanning segment; sequence LIIIGIGVRAMLVAFNTWLLL. Residues 168–190 are Cytoplasmic-facing; that stretch reads KASLETALTAGLWNAGSLNGLTW. Residues 191–211 traverse the membrane as a helical segment; that stretch reads AKTSPSAPIIILMLIAAALLV. Residues 212-235 are Periplasmic-facing; the sequence is RRMRLLEMGDDTACALGVSVERSR. The chain crosses the membrane as a helical span at residues 236–256; that stretch reads LLMMLVAVVLTAAATALAGPI. The Cytoplasmic segment spans residues 257–275; it reads SFIALVAPHIARRISGTAR. Residues 276–296 form a helical membrane-spanning segment; sequence WGLTQAALCGALLLLAADLCA. The Periplasmic portion of the chain corresponds to 297–303; sequence QQLFMPY. Residues 304–324 form a helical membrane-spanning segment; sequence QLPVGVVTVSLGGIYLIVLLI. At 325-330 the chain is on the cytoplasmic side; the sequence is QESRKK.

The protein belongs to the binding-protein-dependent transport system permease family. FecCD subfamily. As to quaternary structure, the complex is composed of two ATP-binding proteins (FepC), two transmembrane proteins (FepD and FepG) and a solute-binding protein (FepB).

It localises to the cell inner membrane. Its function is as follows. Part of the ABC transporter complex FepBDGC involved in ferric enterobactin uptake. Responsible for the translocation of the substrate across the membrane. This is Ferric enterobactin transport system permease protein FepG (fepG) from Escherichia coli (strain K12).